Reading from the N-terminus, the 152-residue chain is MVKAVAVLSSSECVSGTILFSQDGDAPTTVTGNVSGLKPGLHGFHVHALGDTTNGCMSTGPHYNPAGKEHGAPEDENRHAGDLGNITVGEDGTASFTITDEQIPLTGPQSIIGRGVVVHADPDDLGKGGHELTKTTGNAGGRVACGIIGLQG.

Cu cation is bound by residues His-45, His-47, and His-62. Residues Cys-56 and Cys-145 are joined by a disulfide bond. Positions 62, 70, 79, and 82 each coordinate Zn(2+). His-119 is a Cu cation binding site.

It belongs to the Cu-Zn superoxide dismutase family. As to quaternary structure, homodimer. The cofactor is Cu cation. Zn(2+) serves as cofactor.

Its subcellular location is the cytoplasm. The catalysed reaction is 2 superoxide + 2 H(+) = H2O2 + O2. Functionally, destroys radicals which are normally produced within the cells and which are toxic to biological systems. The polypeptide is Superoxide dismutase [Cu-Zn] (SODCC) (Capsicum annuum (Capsicum pepper)).